A 304-amino-acid polypeptide reads, in one-letter code: Non-specific ribonucleoside hydrolase RihC (304 aa).

The active site involves His233.

It belongs to the IUNH family. RihC subfamily.

Its function is as follows. Hydrolyzes both purine and pyrimidine ribonucleosides with a broad-substrate specificity. The sequence is that of Non-specific ribonucleoside hydrolase RihC from Escherichia coli O157:H7.